Consider the following 180-residue polypeptide: Large ribosomal subunit protein uL5 (180 aa).

It belongs to the universal ribosomal protein uL5 family. Part of the 50S ribosomal subunit; part of the 5S rRNA/L5/L18/L25 subcomplex. Contacts the 5S rRNA and the P site tRNA. Forms a bridge to the 30S subunit in the 70S ribosome.

In terms of biological role, this is one of the proteins that bind and probably mediate the attachment of the 5S RNA into the large ribosomal subunit, where it forms part of the central protuberance. In the 70S ribosome it contacts protein S13 of the 30S subunit (bridge B1b), connecting the 2 subunits; this bridge is implicated in subunit movement. Contacts the P site tRNA; the 5S rRNA and some of its associated proteins might help stabilize positioning of ribosome-bound tRNAs. This Mycoplasma pneumoniae (strain ATCC 29342 / M129 / Subtype 1) (Mycoplasmoides pneumoniae) protein is Large ribosomal subunit protein uL5.